We begin with the raw amino-acid sequence, 1235 residues long: ATP-dependent helicase/nuclease subunit A (1235 aa).

The 471-residue stretch at 12-482 (ALWTDDQWKA…IDLSQNFRSR (471 aa)) folds into the UvrD-like helicase ATP-binding domain. Position 33-40 (33-40 (AAAGSGKT)) interacts with ATP. The UvrD-like helicase C-terminal domain occupies 509–800 (AAELTLGASF…RMMTIHASKG (292 aa)).

Belongs to the helicase family. AddA subfamily. Heterodimer of AddA and AddB/RexB. Mg(2+) is required as a cofactor.

The catalysed reaction is Couples ATP hydrolysis with the unwinding of duplex DNA by translocating in the 3'-5' direction.. It catalyses the reaction ATP + H2O = ADP + phosphate + H(+). The heterodimer acts as both an ATP-dependent DNA helicase and an ATP-dependent, dual-direction single-stranded exonuclease. Recognizes the chi site generating a DNA molecule suitable for the initiation of homologous recombination. The AddA nuclease domain is required for chi fragment generation; this subunit has the helicase and 3' -&gt; 5' nuclease activities. The protein is ATP-dependent helicase/nuclease subunit A of Listeria innocua serovar 6a (strain ATCC BAA-680 / CLIP 11262).